Reading from the N-terminus, the 75-residue chain is MELEGLKFLGIGLSVVGMLGAAIGVSNIFSMMLNGIARNPESEEKLKKYVYAGAALTEAMGLFSFVLALLLIFVA.

2 consecutive transmembrane segments (helical) span residues 8–28 (FLGIGLSVVGMLGAAIGVSNI) and 54–74 (AALTEAMGLFSFVLALLLIFV).

This sequence belongs to the ATPase C chain family. As to quaternary structure, F-type ATPases have 2 components, F(1) - the catalytic core - and F(0) - the membrane proton channel. F(1) has five subunits: alpha(3), beta(3), gamma(1), delta(1), epsilon(1). F(0) has three main subunits: a(1), b(2) and c(10-14). The alpha and beta chains form an alternating ring which encloses part of the gamma chain. F(1) is attached to F(0) by a central stalk formed by the gamma and epsilon chains, while a peripheral stalk is formed by the delta and b chains.

The protein localises to the cell inner membrane. Functionally, f(1)F(0) ATP synthase produces ATP from ADP in the presence of a proton or sodium gradient. F-type ATPases consist of two structural domains, F(1) containing the extramembraneous catalytic core and F(0) containing the membrane proton channel, linked together by a central stalk and a peripheral stalk. During catalysis, ATP synthesis in the catalytic domain of F(1) is coupled via a rotary mechanism of the central stalk subunits to proton translocation. Its function is as follows. Key component of the F(0) channel; it plays a direct role in translocation across the membrane. A homomeric c-ring of between 10-14 subunits forms the central stalk rotor element with the F(1) delta and epsilon subunits. The sequence is that of ATP synthase subunit c from Neorickettsia sennetsu (strain ATCC VR-367 / Miyayama) (Ehrlichia sennetsu).